The chain runs to 215 residues: Nascent polypeptide-associated complex subunit alpha (215 aa).

The interval 1–81 (MPGEATETVP…SEKKARKAMS (81 aa)) is disordered. Over residues 9-21 (VPVTEQEMQQPQV) the composition is skewed to polar residues. The span at 29–42 (SDSDDSVPELEEQD) shows a compositional bias: acidic residues. Over residues 43–57 (SAQTQTQQAQLAAAA) the composition is skewed to low complexity. Residues 70–135 (SRSEKKARKA…AKIEDLSQQA (66 aa)) enclose the NAC-A/B domain. One can recognise a UBA domain in the interval 176-213 (VEVKDIELVMSQANVSRAKAVRALKNNNNDIVNAIMEL).

Belongs to the NAC-alpha family.

Functionally, may promote appropriate targeting of ribosome-nascent polypeptide complexes. The sequence is that of Nascent polypeptide-associated complex subunit alpha (naca) from Oreochromis niloticus (Nile tilapia).